A 507-amino-acid chain; its full sequence is Probable D-lactate dehydrogenase, mitochondrial (507 aa).

The transit peptide at 1–52 (MARLLRSATWELFPWRGYCSQKAKGELCRDFVEALKAVVGGSHVSTAAVVRE) directs the protein to the mitochondrion. K36 carries the N6-acetyllysine modification. The FAD-binding PCMH-type domain occupies 62 to 265 (RCEPPDAVVW…TATTLRLHPA (204 aa)). Residue K315 is modified to N6-acetyllysine. Residue K358 is modified to N6-acetyllysine; alternate. Position 358 is an N6-succinyllysine; alternate (K358). Residues K445 and K472 each carry the N6-acetyllysine modification.

It belongs to the FAD-binding oxidoreductase/transferase type 4 family. In terms of assembly, interacts with CSRP3. Requires FAD as cofactor. Expressed moderately in heart and liver and at lower levels in skeletal muscle and kidney.

The protein resides in the mitochondrion. It carries out the reaction (R)-lactate + 2 Fe(III)-[cytochrome c] = 2 Fe(II)-[cytochrome c] + pyruvate + 2 H(+). In terms of biological role, involved in D-lactate, but not L-lactate catabolic process. In Homo sapiens (Human), this protein is Probable D-lactate dehydrogenase, mitochondrial.